Here is a 366-residue protein sequence, read N- to C-terminus: Inactive PGL/p-HBAD biosynthesis glycosyltransferase Mb2982c (366 aa).

Disordered regions lie at residues 1 to 23 and 295 to 366; these read MEET…PNAA and DGDR…HGGP. Over residues 295 to 311 the composition is skewed to basic and acidic residues; it reads DGDRGHRWPEPPEERAG.

It belongs to the UDP-glycosyltransferase family.

The protein is Inactive PGL/p-HBAD biosynthesis glycosyltransferase Mb2982c of Mycobacterium bovis (strain ATCC BAA-935 / AF2122/97).